Consider the following 546-residue polypeptide: Chaperonin GroEL 1 (546 aa).

ATP contacts are provided by residues 30-33, lysine 51, 87-91, glycine 415, 479-481, and aspartate 495; these read TLGP, DGTTT, and NAA. Residues 526–546 form a disordered region; that stretch reads KEDAPMPGGMPGGMGGMGMDM. Gly residues predominate over residues 534-546; it reads GMPGGMGGMGMDM.

This sequence belongs to the chaperonin (HSP60) family. Forms a cylinder of 14 subunits composed of two heptameric rings stacked back-to-back. Interacts with the co-chaperonin GroES.

It localises to the cytoplasm. It carries out the reaction ATP + H2O + a folded polypeptide = ADP + phosphate + an unfolded polypeptide.. Together with its co-chaperonin GroES, plays an essential role in assisting protein folding. The GroEL-GroES system forms a nano-cage that allows encapsulation of the non-native substrate proteins and provides a physical environment optimized to promote and accelerate protein folding. The protein is Chaperonin GroEL 1 of Burkholderia cenocepacia (strain HI2424).